The sequence spans 112 residues: Secretoglobin family 2B member 20 (112 aa).

The N-terminal stretch at 1-23 (MKGTLLLLGLLVTGELSFQTTEA) is a signal peptide. N50 is a glycosylation site (N-linked (GlcNAc...) asparagine).

The protein belongs to the secretoglobin family. As to expression, expressed in lacrimal gland, at higher level in males than females. Expressed in the submandibular gland.

It localises to the secreted. This is Secretoglobin family 2B member 20 (Scgb2b20) from Mus musculus (Mouse).